The primary structure comprises 75 residues: Antimicrobial peptide ctriporin (75 aa).

The signal sequence occupies residues 1 to 22 (MDSKYLFVFLIFNVIVIDLCQG). A Lysine amide modification is found at Lys41. A propeptide spanning residues 47–75 (ELGSQYDYLQDFRKRELDLDDLLSKFPDY) is cleaved from the precursor.

The protein belongs to the non-disulfide-bridged peptide (NDBP) superfamily. Short antimicrobial peptide (group 4) family. As to expression, expressed by the venom gland.

The protein localises to the secreted. It is found in the target cell membrane. Functionally, antimicrobial peptide that acts by breaking the cell wall. Is active against Gram-positive bacteria, fungi and antibiotic-resistant pathogens: S.aureus (MIC=5 ug/ml), M.luteus (MIC=5 ug/ml), B.thuringiensis (MIC=10 ug/ml), B.subtilis (MIC=10 ug/ml), C.albicans (MIC=20 ug/ml), methicillin-resistant S.aureus (MIC=5-10 ug/ml), and penicillin-resistant S.epidermidis (MIC=10 ug/ml). Also shows potent activity against antibiotic-sensitive and -resistant Acinetobacter baumannii (MIC=10-20 uM). Shows cytolytic activity against human erythrocytes. In vivo, is efficient in curing staphylococcal skin infection in mice, when externally applied. This is Antimicrobial peptide ctriporin from Chaerilus tricostatus (Scorpion).